The sequence spans 540 residues: Glucose-6-phosphate isomerase (540 aa).

E350 functions as the Proton donor in the catalytic mechanism. Active-site residues include H381 and K503.

Belongs to the GPI family.

The protein localises to the cytoplasm. The enzyme catalyses alpha-D-glucose 6-phosphate = beta-D-fructose 6-phosphate. It participates in carbohydrate biosynthesis; gluconeogenesis. Its pathway is carbohydrate degradation; glycolysis; D-glyceraldehyde 3-phosphate and glycerone phosphate from D-glucose: step 2/4. Functionally, catalyzes the reversible isomerization of glucose-6-phosphate to fructose-6-phosphate. The protein is Glucose-6-phosphate isomerase of Burkholderia orbicola (strain MC0-3).